Here is a 358-residue protein sequence, read N- to C-terminus: Forkhead box protein I1c (358 aa).

A compositionally biased stretch (polar residues) spans 1 to 13 (MNSIHLPSHQRTS). Disordered regions lie at residues 1 to 25 (MNSI…PKGA) and 191 to 255 (DNGN…PSGI). Positions 106-200 (RPPYSYSALI…DNGNFRRKRK (95 aa)) form a DNA-binding region, fork-head.

It localises to the nucleus. Its function is as follows. Probable transcription factor. The sequence is that of Forkhead box protein I1c from Xenopus tropicalis (Western clawed frog).